Here is a 339-residue protein sequence, read N- to C-terminus: 4-dimethylallyltryptophan N-methyltransferase easF (339 aa).

This sequence belongs to the methyltransferase superfamily. In terms of assembly, homodimer.

It catalyses the reaction 4-(3-methylbut-2-enyl)-L-tryptophan + S-adenosyl-L-methionine = 4-(3-methylbut-2-enyl)-L-abrine + S-adenosyl-L-homocysteine + H(+). It participates in alkaloid biosynthesis; ergot alkaloid biosynthesis. Functionally, 4-dimethylallyltryptophan N-methyltransferase; part of the gene cluster that mediates the biosynthesis of fumiclavanine C, a fungal ergot alkaloid. DmaW catalyzes the first step of ergot alkaloid biosynthesis by condensing dimethylallyl diphosphate (DMAP) and tryptophan to form 4-dimethylallyl-L-tryptophan. The second step is catalyzed by the methyltransferase easF that methylates 4-dimethylallyl-L-tryptophan in the presence of S-adenosyl-L-methionine, resulting in the formation of 4-dimethylallyl-L-abrine. The catalase easC and the FAD-dependent oxidoreductase easE then transform 4-dimethylallyl-L-abrine to chanoclavine-I which is further oxidized by EasD in the presence of NAD(+), resulting in the formation of chanoclavine-I aldehyde. EasA reduces chanoclavine-I aldehyde to dihydrochanoclavine-I aldehyde that spontaneously dehydrates to form 6,8-dimethyl-6,7-didehydroergoline. EasG then catalyzes the reduction of 6,8-dimethyl-6,7-didehydroergoline to form festuclavine. Hydrolysis of festuclavine by easM then leads to the formation of fumigaclavine B which is in turn acetylated by easN to fumigaclavine A. Finally, easL catalyzes the conversion of fumigaclavine A into fumigaclavine C by attaching a dimethylallyl moiety to C-2 of the indole nucleus. The chain is 4-dimethylallyltryptophan N-methyltransferase easF from Aspergillus fumigatus (strain ATCC MYA-4609 / CBS 101355 / FGSC A1100 / Af293) (Neosartorya fumigata).